Here is an 86-residue protein sequence, read N- to C-terminus: Neurotoxin 3FTx-RK (86 aa).

Residues 1–21 (MKTLLLTLVVVTIVCLELGYT) form the signal peptide. Intrachain disulfides connect Cys-24/Cys-45, Cys-38/Cys-63, Cys-67/Cys-78, and Cys-79/Cys-84.

In terms of tissue distribution, expressed by the venom gland.

It localises to the secreted. The protein is Neurotoxin 3FTx-RK of Bungarus fasciatus (Banded krait).